A 265-amino-acid polypeptide reads, in one-letter code: Hydroxyethylthiazole kinase 2 (265 aa).

Met-39 provides a ligand contact to substrate. Positions 115 and 168 each coordinate ATP. Gly-195 is a binding site for substrate.

The protein belongs to the Thz kinase family. It depends on Mg(2+) as a cofactor.

The enzyme catalyses 5-(2-hydroxyethyl)-4-methylthiazole + ATP = 4-methyl-5-(2-phosphooxyethyl)-thiazole + ADP + H(+). It functions in the pathway cofactor biosynthesis; thiamine diphosphate biosynthesis; 4-methyl-5-(2-phosphoethyl)-thiazole from 5-(2-hydroxyethyl)-4-methylthiazole: step 1/1. Functionally, catalyzes the phosphorylation of the hydroxyl group of 4-methyl-5-beta-hydroxyethylthiazole (THZ). The chain is Hydroxyethylthiazole kinase 2 from Clostridium botulinum (strain ATCC 19397 / Type A).